We begin with the raw amino-acid sequence, 268 residues long: Ribosomal RNA large subunit methyltransferase E (268 aa).

Gly50, Trp52, Asp68, Asp84, and Asp109 together coordinate S-adenosyl-L-methionine. Residue Lys149 is the Proton acceptor of the active site. The region spanning 196–254 (PLRKGDKFVVDIEKLGSSGDGAVLIEGFVVFVKEVEVGEKVRIKISDVKPNFAFADVEE) is the TRAM domain.

The protein belongs to the class I-like SAM-binding methyltransferase superfamily. RNA methyltransferase RlmE family.

The protein localises to the cytoplasm. The enzyme catalyses uridine(2552) in 23S rRNA + S-adenosyl-L-methionine = 2'-O-methyluridine(2552) in 23S rRNA + S-adenosyl-L-homocysteine + H(+). Specifically methylates the uridine in position 2552 of 23S rRNA at the 2'-O position of the ribose in the fully assembled 50S ribosomal subunit. This is Ribosomal RNA large subunit methyltransferase E from Methanosarcina mazei (strain ATCC BAA-159 / DSM 3647 / Goe1 / Go1 / JCM 11833 / OCM 88) (Methanosarcina frisia).